A 339-amino-acid polypeptide reads, in one-letter code: Immunoglobulin-binding protein 1 (339 aa).

N-acetylalanine is present on alanine 2. Positions 46–60 (LDLLEKAAEMLSQLD) constitute a UIM domain. An interaction with PPP2CA region spans residues 98–202 (RLDHLQRARE…YLLHLQRWID (105 aa)). Disordered stretches follow at residues 221–243 (RDSS…VKPF) and 289–339 (APEE…QNMG). The interval 225–290 (REASTSNSSR…PDQGIAKAAP (66 aa)) is interaction with MID1. Lysine 241 is subject to N6-acetyllysine. Positions 301–312 (EEQEEKEEEDDE) are enriched in acidic residues. A compositionally biased stretch (basic and acidic residues) spans 313–329 (QTLHRAREWDDWKDTHP).

This sequence belongs to the IGBP1/TAP42 family. In terms of assembly, interacts with partially folded PPP2CA, but not with the fully active protein. Interacts with PPP2CB, and with PP4 and PP6. Interacts with MID1 and MID2. Interacts with ubiquitin. In terms of processing, phosphorylated. Monoubiquitination by MID1 triggers calpain-mediated cleavage and switches IGBP1 activity from protective to destructive. In terms of tissue distribution, ubiquitously expressed with highest levels in heart, skeletal muscle and pancreas.

Its subcellular location is the cytoplasm. In terms of biological role, associated to surface IgM-receptor; may be involved in signal transduction. Involved in regulation of the catalytic activity of the phosphatases PP2A, PP4 and PP6 by protecting their partially folded catalytic subunits from degradative polyubiquitination until they associate with regulatory subunits. This chain is Immunoglobulin-binding protein 1 (IGBP1), found in Homo sapiens (Human).